Here is a 171-residue protein sequence, read N- to C-terminus: Protein GrpE (171 aa).

Residues 1–22 (MNHEHPDIESQQSAADAAAAAG) are disordered.

It belongs to the GrpE family. Homodimer.

Its subcellular location is the cytoplasm. In terms of biological role, participates actively in the response to hyperosmotic and heat shock by preventing the aggregation of stress-denatured proteins, in association with DnaK and GrpE. It is the nucleotide exchange factor for DnaK and may function as a thermosensor. Unfolded proteins bind initially to DnaJ; upon interaction with the DnaJ-bound protein, DnaK hydrolyzes its bound ATP, resulting in the formation of a stable complex. GrpE releases ADP from DnaK; ATP binding to DnaK triggers the release of the substrate protein, thus completing the reaction cycle. Several rounds of ATP-dependent interactions between DnaJ, DnaK and GrpE are required for fully efficient folding. The protein is Protein GrpE of Stenotrophomonas maltophilia (strain R551-3).